The primary structure comprises 106 residues: Nucleoid-associated protein XAC1110 (106 aa).

The segment covering 80-89 (KIDAESKDRM) has biased composition (basic and acidic residues). The tract at residues 80–106 (KIDAESKDRMGSATAGMQLPPGMKLPF) is disordered.

This sequence belongs to the YbaB/EbfC family. Homodimer.

It localises to the cytoplasm. It is found in the nucleoid. Its function is as follows. Binds to DNA and alters its conformation. May be involved in regulation of gene expression, nucleoid organization and DNA protection. The chain is Nucleoid-associated protein XAC1110 from Xanthomonas axonopodis pv. citri (strain 306).